We begin with the raw amino-acid sequence, 162 residues long: Neuritin-like protein (162 aa).

A signal peptide spans 1 to 32 (MMCNCCHCHWRRRCQRLPCALTLLLLLPLAVA). A136 carries the GPI-anchor amidated alanine lipid modification. Residues 137-162 (PALAPAPAPVLLAAALALACLLGPLA) constitute a propeptide, removed in mature form.

It belongs to the neuritin family.

The protein resides in the cell membrane. The sequence is that of Neuritin-like protein (Nrn1l) from Mus musculus (Mouse).